Reading from the N-terminus, the 157-residue chain is Isotocin-neurophysin IT 1 (157 aa).

The signal sequence occupies residues 1–20 (MFGTSVSALCLLFLLSVCTA). Cysteines 21 and 26 form a disulfide. Gly29 is subject to Glycine amide. Intrachain disulfides connect Cys42–Cys86, Cys45–Cys59, Cys53–Cys76, Cys60–Cys66, Cys93–Cys106, Cys100–Cys118, and Cys107–Cys112.

The protein belongs to the vasopressin/oxytocin family. Seven disulfide bonds are present in neurophysin.

The protein localises to the secreted. Functionally, isotocin causes contraction of smooth muscles. This Oncorhynchus keta (Chum salmon) protein is Isotocin-neurophysin IT 1.